The sequence spans 243 residues: 1-(5-phosphoribosyl)-5-[(5-phosphoribosylamino)methylideneamino] imidazole-4-carboxamide isomerase (243 aa).

Residue D8 is the Proton acceptor of the active site. D130 serves as the catalytic Proton donor.

Belongs to the HisA/HisF family.

Its subcellular location is the cytoplasm. It catalyses the reaction 1-(5-phospho-beta-D-ribosyl)-5-[(5-phospho-beta-D-ribosylamino)methylideneamino]imidazole-4-carboxamide = 5-[(5-phospho-1-deoxy-D-ribulos-1-ylimino)methylamino]-1-(5-phospho-beta-D-ribosyl)imidazole-4-carboxamide. It participates in amino-acid biosynthesis; L-histidine biosynthesis; L-histidine from 5-phospho-alpha-D-ribose 1-diphosphate: step 4/9. The protein is 1-(5-phosphoribosyl)-5-[(5-phosphoribosylamino)methylideneamino] imidazole-4-carboxamide isomerase of Cellvibrio japonicus (strain Ueda107) (Pseudomonas fluorescens subsp. cellulosa).